Consider the following 72-residue polypeptide: UPF0346 protein GTNG_1419 (72 aa).

This sequence belongs to the UPF0346 family.

The sequence is that of UPF0346 protein GTNG_1419 from Geobacillus thermodenitrificans (strain NG80-2).